The primary structure comprises 2896 residues: Hemocyanin G-type, units Oda to Odg (2896 aa).

The tract at residues 1-419 (NLIRKDVDAL…ADMVVVDKTG (419 aa)) is functional unit Oda. A Cu cation-binding site is contributed by histidine 41. An intrachain disulfide couples cysteine 47 to cysteine 57. The 2'-(S-cysteinyl)-histidine (Cys-His) cross-link spans 58–60 (CLH). Cu cation is bound by residues histidine 60, histidine 69, histidine 178, histidine 182, and histidine 209. 2 disulfide bridges follow: cysteine 168–cysteine 234 and cysteine 321–cysteine 333. N-linked (GlcNAc...) asparagine glycosylation is present at asparagine 386. The tract at residues 420 to 834 (LNVRKDLQSL…KESGVVFDEL (415 aa)) is functional unit Odb. Histidine 460 is a Cu cation binding site. Cysteine 466 and cysteine 477 are oxidised to a cystine. The segment at residues 478-480 (CVH) is a cross-link (2'-(S-cysteinyl)-histidine (Cys-His)). Residues histidine 480, histidine 489, histidine 601, histidine 605, and histidine 632 each coordinate Cu cation. Cysteine 591 and cysteine 657 are joined by a disulfide. A glycan (N-linked (GlcNAc...) asparagine) is linked at asparagine 804. Residues 835 to 1254 (YRSRRDVSSL…GIWVEPVTSA (420 aa)) are functional unit Odc. Position 875 (histidine 875) interacts with Cu cation. Cysteine 881 and cysteine 892 are disulfide-bonded. Positions 893–895 (CHH) form a cross-link, 2'-(S-cysteinyl)-histidine (Cys-His). Histidine 895, histidine 904, histidine 1013, histidine 1017, histidine 1044, and histidine 1292 together coordinate Cu cation. Cysteine 1003 and cysteine 1070 form a disulfide bridge. Positions 1255–1667 (NRIRKNLNAL…ADIKSEEGNE (413 aa)) are functional unit Odd. A disulfide bridge connects residues cysteine 1298 and cysteine 1309. A cross-link (2'-(S-cysteinyl)-histidine (Cys-His)) is located at residues 1310-1312 (CIH). Cu cation-binding residues include histidine 1312, histidine 1321, histidine 1425, histidine 1429, and histidine 1456. Cysteine 1415 and cysteine 1482 are disulfide-bonded. An N-linked (GlcNAc...) asparagine glycan is attached at asparagine 1496. Residues cysteine 1571 and cysteine 1581 are joined by a disulfide bond. Residue asparagine 1634 is glycosylated (N-linked (GlcNAc...) asparagine). The segment at 1668–2085 (YLVRKNVERL…NEDADIDTPL (418 aa)) is functional unit Ode. Histidine 1708 provides a ligand contact to Cu cation. Cysteine 1714 and cysteine 1725 are oxidised to a cystine. The segment at residues 1726–1728 (CLH) is a cross-link (2'-(S-cysteinyl)-histidine (Cys-His)). Histidine 1728, histidine 1737, histidine 1849, histidine 1853, and histidine 1880 together coordinate Cu cation. Disulfide bonds link cysteine 1839–cysteine 1906 and cysteine 1997–cysteine 2003. Asparagine 2055 carries N-linked (GlcNAc...) asparagine glycosylation. The segment at 2086–2502 (NHIRRNVESL…REVHKKTVGD (417 aa)) is functional unit Odf. A Cu cation-binding site is contributed by histidine 2126. Residues cysteine 2131 and cysteine 2141 are joined by a disulfide bond. A cross-link (2'-(S-cysteinyl)-histidine (Cys-His)) is located at residues 2142–2144 (CLH). Cu cation contacts are provided by histidine 2144 and histidine 2153. An N-linked (GlcNAc...) asparagine glycan is attached at asparagine 2201. 2 cysteine pairs are disulfide-bonded: cysteine 2252/cysteine 2319 and cysteine 2406/cysteine 2411. Histidine 2262, histidine 2266, and histidine 2293 together coordinate Cu cation. A functional unit Odg region spans residues 2503-2896 (AIIRKNVNSL…VFLAPAKTTH (394 aa)). Histidine 2543 lines the Cu cation pocket. Cysteine 2549 and cysteine 2559 form a disulfide bridge. Asparagine 2553 carries an N-linked (GlcNAc...) asparagine glycan. The segment at residues 2560-2562 (CQH) is a cross-link (2'-(S-cysteinyl)-histidine (Cys-His)). Residues histidine 2562, histidine 2571, histidine 2671, histidine 2675, and histidine 2702 each contribute to the Cu cation site. 2 disulfides stabilise this stretch: cysteine 2661–cysteine 2728 and cysteine 2815–cysteine 2821.

It belongs to the tyrosinase family. Hemocyanin subfamily. In terms of assembly, decamers of large identical subunits (350 kDa), each containing 7 globular oxygen-binding functional units: ODA, ODB, ODC, ODD, ODE, ODF, and ODG. Decamer formation requires the presence of magnesium ions. Cu(2+) serves as cofactor.

Functionally, hemocyanins are copper-containing oxygen carriers occurring freely dissolved in the hemolymph of many mollusks and arthropods. The sequence is that of Hemocyanin G-type, units Oda to Odg (ODHCY) from Enteroctopus dofleini (North Pacific giant octopus).